Consider the following 580-residue polypeptide: Lysine--tRNA ligase (580 aa).

The 'HIGH' region motif lies at 43-51; sequence PSGPIHLGN. The disordered stretch occupies residues 178–209; that stretch reads KAPAKKSQKPLDEAELEAAEGSGAAAEDDGSS. The span at 196–209 shows a compositional bias: low complexity; sequence AEGSGAAAEDDGSS. Positions 325–329 match the 'KMSKS' region motif; the sequence is KMSSS.

It belongs to the class-I aminoacyl-tRNA synthetase family.

It is found in the cytoplasm. The enzyme catalyses tRNA(Lys) + L-lysine + ATP = L-lysyl-tRNA(Lys) + AMP + diphosphate. In Streptomyces coelicolor (strain ATCC BAA-471 / A3(2) / M145), this protein is Lysine--tRNA ligase (lysS).